We begin with the raw amino-acid sequence, 214 residues long: Outer-membrane lipoprotein LolB (214 aa).

A signal peptide spans methionine 1 to glycine 25. Cysteine 26 carries the N-palmitoyl cysteine lipid modification. Cysteine 26 is lipidated: S-diacylglycerol cysteine.

This sequence belongs to the LolB family. In terms of assembly, monomer.

The protein localises to the cell outer membrane. Plays a critical role in the incorporation of lipoproteins in the outer membrane after they are released by the LolA protein. The sequence is that of Outer-membrane lipoprotein LolB from Shewanella sp. (strain MR-7).